Consider the following 239-residue polypeptide: Ribose-5-phosphate isomerase A (239 aa).

Substrate-binding positions include Ser40–Thr43, Asp96–Asp99, and Lys110–Gly113. Catalysis depends on Glu119, which acts as the Proton acceptor. Lys137 is a binding site for substrate.

It belongs to the ribose 5-phosphate isomerase family. Homodimer.

It catalyses the reaction aldehydo-D-ribose 5-phosphate = D-ribulose 5-phosphate. The protein operates within carbohydrate degradation; pentose phosphate pathway; D-ribose 5-phosphate from D-ribulose 5-phosphate (non-oxidative stage): step 1/1. In terms of biological role, catalyzes the reversible conversion of ribose-5-phosphate to ribulose 5-phosphate. The protein is Ribose-5-phosphate isomerase A of Methanococcus vannielii (strain ATCC 35089 / DSM 1224 / JCM 13029 / OCM 148 / SB).